A 387-amino-acid polypeptide reads, in one-letter code: Lipid-A-disaccharide synthase (387 aa).

Belongs to the LpxB family.

It carries out the reaction a lipid X + a UDP-2-N,3-O-bis[(3R)-3-hydroxyacyl]-alpha-D-glucosamine = a lipid A disaccharide + UDP + H(+). The protein operates within bacterial outer membrane biogenesis; LPS lipid A biosynthesis. Functionally, condensation of UDP-2,3-diacylglucosamine and 2,3-diacylglucosamine-1-phosphate to form lipid A disaccharide, a precursor of lipid A, a phosphorylated glycolipid that anchors the lipopolysaccharide to the outer membrane of the cell. The sequence is that of Lipid-A-disaccharide synthase from Nitrosococcus oceani (strain ATCC 19707 / BCRC 17464 / JCM 30415 / NCIMB 11848 / C-107).